A 392-amino-acid chain; its full sequence is Spermatogenesis associated 6-like protein (392 aa).

Phosphoserine is present on residues Ser-260 and Ser-263. Residues 286 to 301 are compositionally biased toward low complexity; sequence SCLDSSQFGKSSSSKQ. The tract at residues 286–305 is disordered; sequence SCLDSSQFGKSSSSKQGDAD.

It belongs to the SPATA6 family.

This chain is Spermatogenesis associated 6-like protein (SPATA6L), found in Homo sapiens (Human).